The sequence spans 156 residues: ATP synthase subunit b (156 aa).

The helical transmembrane segment at 7–29 threads the bilayer; sequence LFAQMVVFLVLAWFTMKFVWPPL.

Belongs to the ATPase B chain family. F-type ATPases have 2 components, F(1) - the catalytic core - and F(0) - the membrane proton channel. F(1) has five subunits: alpha(3), beta(3), gamma(1), delta(1), epsilon(1). F(0) has three main subunits: a(1), b(2) and c(10-14). The alpha and beta chains form an alternating ring which encloses part of the gamma chain. F(1) is attached to F(0) by a central stalk formed by the gamma and epsilon chains, while a peripheral stalk is formed by the delta and b chains.

Its subcellular location is the cell inner membrane. Functionally, f(1)F(0) ATP synthase produces ATP from ADP in the presence of a proton or sodium gradient. F-type ATPases consist of two structural domains, F(1) containing the extramembraneous catalytic core and F(0) containing the membrane proton channel, linked together by a central stalk and a peripheral stalk. During catalysis, ATP synthesis in the catalytic domain of F(1) is coupled via a rotary mechanism of the central stalk subunits to proton translocation. In terms of biological role, component of the F(0) channel, it forms part of the peripheral stalk, linking F(1) to F(0). This is ATP synthase subunit b from Burkholderia multivorans (strain ATCC 17616 / 249).